The following is a 214-amino-acid chain: Eukaryotic translation initiation factor 4E-1B (214 aa).

MRNA is bound by residues 53–54 (WQ), 99–100 (WE), 154–159 (RAKGDK), and 202–204 (TKS).

Ovary, muscle and testis.

It localises to the cytoplasm. The protein resides in the nucleus. In terms of biological role, does not appear to be a mRNA-cap-binding protein. This chain is Eukaryotic translation initiation factor 4E-1B, found in Danio rerio (Zebrafish).